We begin with the raw amino-acid sequence, 268 residues long: uncharacterized protein (268 aa).

Residues 45 to 64 (SDTQGPAPGINGQGKPSPGA) form a disordered region.

This is an uncharacterized protein from Aquifex aeolicus (strain VF5).